The following is a 457-amino-acid chain: Multidrug resistance protein MdtK (457 aa).

12 helical membrane-spanning segments follow: residues Leu11 to Val31, Ala46 to Leu66, Trp93 to Ile113, Ala127 to Leu147, Gly160 to Tyr180, Leu188 to Met208, Leu243 to Val263, Leu278 to Gly300, Tyr316 to Phe336, Val350 to Ile370, Ile387 to Gly407, and Pro418 to Leu438.

This sequence belongs to the multi antimicrobial extrusion (MATE) (TC 2.A.66.1) family. MdtK subfamily.

It localises to the cell inner membrane. Its function is as follows. Multidrug efflux pump that functions probably as a Na(+)/drug antiporter. The polypeptide is Multidrug resistance protein MdtK (Yersinia enterocolitica serotype O:8 / biotype 1B (strain NCTC 13174 / 8081)).